A 454-amino-acid chain; its full sequence is Chromosomal replication initiator protein DnaA (454 aa).

Residues M1–A83 form a domain I, interacts with DnaA modulators region. The tract at residues A83 to S113 is domain II. The interval D114–A332 is domain III, AAA+ region. Positions 158, 160, 161, and 162 each coordinate ATP. Residues N333 to K454 form a domain IV, binds dsDNA region.

This sequence belongs to the DnaA family. Oligomerizes as a right-handed, spiral filament on DNA at oriC.

Its subcellular location is the cytoplasm. Its function is as follows. Plays an essential role in the initiation and regulation of chromosomal replication. ATP-DnaA binds to the origin of replication (oriC) to initiate formation of the DNA replication initiation complex once per cell cycle. Binds the DnaA box (a 9 base pair repeat at the origin) and separates the double-stranded (ds)DNA. Forms a right-handed helical filament on oriC DNA; dsDNA binds to the exterior of the filament while single-stranded (ss)DNA is stabiized in the filament's interior. The ATP-DnaA-oriC complex binds and stabilizes one strand of the AT-rich DNA unwinding element (DUE), permitting loading of DNA polymerase. After initiation quickly degrades to an ADP-DnaA complex that is not apt for DNA replication. Binds acidic phospholipids. The sequence is that of Chromosomal replication initiator protein DnaA from Streptococcus thermophilus (strain ATCC BAA-250 / LMG 18311).